A 601-amino-acid chain; its full sequence is Phosphomethylpyrimidine synthase (601 aa).

Residues N224, M253, Y282, H318, 338–340 (SRG), 379–382 (DGLR), and E418 contribute to the substrate site. H422 provides a ligand contact to Zn(2+). A substrate-binding site is contributed by Y445. Zn(2+) is bound at residue H486. Residues C566, C569, and C574 each contribute to the [4Fe-4S] cluster site.

Belongs to the ThiC family. Homodimer. The cofactor is [4Fe-4S] cluster.

It catalyses the reaction 5-amino-1-(5-phospho-beta-D-ribosyl)imidazole + S-adenosyl-L-methionine = 4-amino-2-methyl-5-(phosphooxymethyl)pyrimidine + CO + 5'-deoxyadenosine + formate + L-methionine + 3 H(+). The protein operates within cofactor biosynthesis; thiamine diphosphate biosynthesis. Functionally, catalyzes the synthesis of the hydroxymethylpyrimidine phosphate (HMP-P) moiety of thiamine from aminoimidazole ribotide (AIR) in a radical S-adenosyl-L-methionine (SAM)-dependent reaction. This Xylella fastidiosa (strain 9a5c) protein is Phosphomethylpyrimidine synthase.